The primary structure comprises 89 residues: UPF0297 protein OB2008 (89 aa).

The protein belongs to the UPF0297 family.

The protein is UPF0297 protein OB2008 of Oceanobacillus iheyensis (strain DSM 14371 / CIP 107618 / JCM 11309 / KCTC 3954 / HTE831).